The following is a 440-amino-acid chain: Tumor necrosis factor receptor superfamily member 10B (440 aa).

Disordered stretches follow at residues 1-32 (MEQR…RPGP) and 60-84 (DLAP…CPPG). Residues 1–55 (MEQRGQNAPAASGARKRHGPGPREARGARPGPRVPKTLVLVVAAVLLLVSAESAL) form the signal peptide. At 56–210 (ITQQDLAPQQ…SPGTPASPCS (155 aa)) the chain is on the extracellular side. TNFR-Cys repeat units follow at residues 57–94 (TQQD…GRDC), 97–137 (CKYG…NTVC), and 138–178 (QCEE…DIEC). A compositionally biased stretch (low complexity) spans 60–71 (DLAPQQRAAPQQ). 7 disulfide bridges follow: cysteine 81–cysteine 94, cysteine 97–cysteine 113, cysteine 116–cysteine 129, cysteine 119–cysteine 137, cysteine 139–cysteine 153, cysteine 156–cysteine 170, and cysteine 160–cysteine 178. The stretch at 192 to 206 (PAVEETVTSSPGTPA) is one TAPE repeat. Residues 211–231 (LSGIIIGVTVAAVVLIVAVFV) traverse the membrane as a helical segment. Residues 232–440 (CKSLLWKKVL…LEGNADSAMS (209 aa)) are Cytoplasmic-facing. Residues 339 to 422 (RQCFDDFADL…LAKQKIEDHL (84 aa)) form the Death domain.

Monomer. Can interact with TRADD and RIPK1. Interacts with HCMV protein UL141; this interaction prevents TNFRSF10B cell surface expression. Two TNFRSF10B monomers interact with a UL141 homodimer. Three TNFRSF10B molecules interact with TNFSF10 homotrimer. In the absence of stimulation, interacts with BIRC2, DDX3X and GSK3B. The interaction with BIRC2 and DDX3X is further enhanced upon receptor stimulation and accompanied by DDX3X and BIRC2 cleavage. (Microbial infection) Glycosylated on Arg residue by S.typhimurium protein Ssek3. In terms of tissue distribution, widely expressed in adult and fetal tissues; very highly expressed in tumor cell lines such as HeLaS3, K-562, HL-60, SW480, A-549 and G-361; highly expressed in heart, peripheral blood lymphocytes, liver, pancreas, spleen, thymus, prostate, ovary, uterus, placenta, testis, esophagus, stomach and throughout the intestinal tract; not detectable in brain.

The protein localises to the membrane. Its function is as follows. Receptor for the cytotoxic ligand TNFSF10/TRAIL. The adapter molecule FADD recruits caspase-8 to the activated receptor. The resulting death-inducing signaling complex (DISC) performs caspase-8 proteolytic activation which initiates the subsequent cascade of caspases (aspartate-specific cysteine proteases) mediating apoptosis. Promotes the activation of NF-kappa-B. Essential for ER stress-induced apoptosis. The chain is Tumor necrosis factor receptor superfamily member 10B (TNFRSF10B) from Homo sapiens (Human).